Consider the following 586-residue polypeptide: Eukaryotic translation initiation factor 3 subunit D (586 aa).

The disordered stretch occupies residues F107–R154. The span at G108 to A131 shows a compositional bias: gly residues. Positions S301 to P315 are RNA gate. Residues F566–Q577 show a composition bias toward acidic residues. A disordered region spans residues F566 to A586.

It belongs to the eIF-3 subunit D family. In terms of assembly, component of the eukaryotic translation initiation factor 3 (eIF-3) complex.

Its subcellular location is the cytoplasm. MRNA cap-binding component of the eukaryotic translation initiation factor 3 (eIF-3) complex, which is involved in protein synthesis of a specialized repertoire of mRNAs and, together with other initiation factors, stimulates binding of mRNA and methionyl-tRNAi to the 40S ribosome. The eIF-3 complex specifically targets and initiates translation of a subset of mRNAs involved in cell proliferation. In the eIF-3 complex, eif3d specifically recognizes and binds the 7-methylguanosine cap of a subset of mRNAs. In Emericella nidulans (strain FGSC A4 / ATCC 38163 / CBS 112.46 / NRRL 194 / M139) (Aspergillus nidulans), this protein is Eukaryotic translation initiation factor 3 subunit D.